Reading from the N-terminus, the 739-residue chain is Polyribonucleotide nucleotidyltransferase (739 aa).

Positions 488 and 494 each coordinate Mg(2+). The region spanning 555–614 is the KH domain; sequence PKIVTLKINPDKIRDVIGPGGKVINGIIDETGVKIDIDQDGTVFIASTDQDGINHARQLI. Positions 624–692 constitute an S1 motif domain; that stretch reads GEEFDGTVRR…DKGRVNASHK (69 aa). A disordered region spans residues 698–739; sequence GMSPEDRAAYDEKKKTERDSRPPRRDTGSRPPRDGQRPPRRN. A compositionally biased stretch (basic and acidic residues) spans 701–739; the sequence is PEDRAAYDEKKKTERDSRPPRRDTGSRPPRDGQRPPRRN.

Belongs to the polyribonucleotide nucleotidyltransferase family. The cofactor is Mg(2+).

It localises to the cytoplasm. The enzyme catalyses RNA(n+1) + phosphate = RNA(n) + a ribonucleoside 5'-diphosphate. In terms of biological role, involved in mRNA degradation. Catalyzes the phosphorolysis of single-stranded polyribonucleotides processively in the 3'- to 5'-direction. The protein is Polyribonucleotide nucleotidyltransferase of Exiguobacterium sibiricum (strain DSM 17290 / CCUG 55495 / CIP 109462 / JCM 13490 / 255-15).